Consider the following 807-residue polypeptide: Glycerol-3-phosphate acyltransferase (807 aa).

The HXXXXD motif signature appears at 305–310 (CHRSHM).

It belongs to the GPAT/DAPAT family.

Its subcellular location is the cell inner membrane. It carries out the reaction sn-glycerol 3-phosphate + an acyl-CoA = a 1-acyl-sn-glycero-3-phosphate + CoA. The protein operates within phospholipid metabolism; CDP-diacylglycerol biosynthesis; CDP-diacylglycerol from sn-glycerol 3-phosphate: step 1/3. The chain is Glycerol-3-phosphate acyltransferase from Aliivibrio fischeri (strain ATCC 700601 / ES114) (Vibrio fischeri).